Reading from the N-terminus, the 716-residue chain is Splicing factor Cactin (716 aa).

The segment at 1–104 (MGSHGKGKRD…SKKAQKKALR (104 aa)) is disordered. Residues 10–22 (DRSGRQKKRRDES) are compositionally biased toward basic and acidic residues. Positions 25–45 (GSESESYTSDSDGSDDLSPPR) are enriched in low complexity. The segment covering 46 to 61 (SSRRKKGSSSRRTRRR) has biased composition (basic residues). The span at 81-95 (SSKDYSEEKVTEYMS) shows a compositional bias: basic and acidic residues. The stretch at 153–201 (SVKAEKRRHRERMTEVEKVKKRREERAVEKARHEEEMALLARERARAEF) forms a coiled coil. A Phosphoserine modification is found at S450. The interval 466-525 (VEENEEEINDTNLSDAEEAFSPEPVAEEEEADEAAEAAGSFSPELMHGDDREEAIDPEED) is disordered. The span at 468–500 (ENEEEINDTNLSDAEEAFSPEPVAEEEEADEAA) shows a compositional bias: acidic residues.

Belongs to the CACTIN family. As to quaternary structure, interacts with At5g63440.

It is found in the nucleus speckle. In terms of biological role, plays a role in pre-mRNA splicing by facilitating excision of a subset of introns. Required for embryogenesis. This is Splicing factor Cactin (CTN) from Arabidopsis thaliana (Mouse-ear cress).